The following is a 528-amino-acid chain: Cytochrome P450 monooxygenase lenC (528 aa).

Residues 5–27 (FVLPHPASMGASCILGLLLLTIL) traverse the membrane as a helical segment. Cys469 contacts heme.

It belongs to the cytochrome P450 family. The cofactor is heme.

It localises to the membrane. The protein operates within alkaloid biosynthesis. In terms of biological role, nonribosomal peptide synthetase; part of the gene cluster that mediates the biosynthesis of the ergot alkaloids lentopeptins A and B. Within the pathway, lenC catalyzes the post-NRPS oxidative modification steps using as substrate the N-acyldiketopiperazine intermediate produced by the NRPS lenA. Lentopeptin A forms via a stereospecific hydroxylation, followed by a spontaneous bicyclic lactam core formation, while lentopeptin B is produced through an initial dehydrogenation, followed by a bicyclic lactam core formation and stereospecific hydration. The phenylalanine ammonia-lyase lenB provides the cinnamic acid starter unit to the NRPS lenA for the synthesis of the N-acyldiketopiperazine intermediate which in turn is converted into lentopeptins A and B by lenC. This chain is Cytochrome P450 monooxygenase lenC, found in Aspergillus lentulus.